The sequence spans 407 residues: Phosphopentomutase (407 aa).

Mn(2+) contacts are provided by Asp10, Asp306, His311, Asp347, His348, and His359.

It belongs to the phosphopentomutase family. Requires Mn(2+) as cofactor.

It localises to the cytoplasm. The catalysed reaction is 2-deoxy-alpha-D-ribose 1-phosphate = 2-deoxy-D-ribose 5-phosphate. It carries out the reaction alpha-D-ribose 1-phosphate = D-ribose 5-phosphate. The protein operates within carbohydrate degradation; 2-deoxy-D-ribose 1-phosphate degradation; D-glyceraldehyde 3-phosphate and acetaldehyde from 2-deoxy-alpha-D-ribose 1-phosphate: step 1/2. Functionally, isomerase that catalyzes the conversion of deoxy-ribose 1-phosphate (dRib-1-P) and ribose 1-phosphate (Rib-1-P) to deoxy-ribose 5-phosphate (dRib-5-P) and ribose 5-phosphate (Rib-5-P), respectively. The sequence is that of Phosphopentomutase from Photorhabdus laumondii subsp. laumondii (strain DSM 15139 / CIP 105565 / TT01) (Photorhabdus luminescens subsp. laumondii).